A 94-amino-acid chain; its full sequence is MDAVIDTSVIIEIFRGNKDTLYQICDYNCKITSITVFELYCGNLKENEMIMIDSLPKLNFDDKSSKIAGNIFKKLKKEGKIPSVKDLLIASIFY.

D6 is a binding site for Mg(2+).

This sequence belongs to the PINc/VapC protein family. Requires Mg(2+) as cofactor.

Its function is as follows. Toxic component of a type II toxin-antitoxin (TA) system. An RNase. Its cognate antitoxin is VapB3. This chain is Ribonuclease VapC3 (vapC3), found in Methanocaldococcus jannaschii (strain ATCC 43067 / DSM 2661 / JAL-1 / JCM 10045 / NBRC 100440) (Methanococcus jannaschii).